The primary structure comprises 201 residues: Putative ankyrin repeat protein YahD (201 aa).

ANK repeat units follow at residues 5 to 34, 38 to 67, 71 to 100, 104 to 134, 138 to 172, and 176 to 201; these read NLPA…DINT, QGKT…DINK, TCLN…DLNC, FGGV…NVNQ, VGWT…SPHL, and YGKT…AAGA.

The sequence is that of Putative ankyrin repeat protein YahD (yahD) from Escherichia coli (strain K12).